Reading from the N-terminus, the 695-residue chain is Elongation factor G (695 aa).

Positions 12–286 (DKLRNIGIMA…AVIDYLPSPL (275 aa)) constitute a tr-type G domain. GTP-binding positions include 21–28 (AHIDAGKT), 85–89 (DTPGH), and 139–142 (NKMD).

Belongs to the TRAFAC class translation factor GTPase superfamily. Classic translation factor GTPase family. EF-G/EF-2 subfamily.

The protein localises to the cytoplasm. In terms of biological role, catalyzes the GTP-dependent ribosomal translocation step during translation elongation. During this step, the ribosome changes from the pre-translocational (PRE) to the post-translocational (POST) state as the newly formed A-site-bound peptidyl-tRNA and P-site-bound deacylated tRNA move to the P and E sites, respectively. Catalyzes the coordinated movement of the two tRNA molecules, the mRNA and conformational changes in the ribosome. The sequence is that of Elongation factor G from Thermotoga sp. (strain RQ2).